We begin with the raw amino-acid sequence, 273 residues long: MADTDIRVAIVGAGGRMGRQLIQAIYQLDGVALGAALERSGSSLIGADAGELAGIGHNGVTVCDDLTSIVDDFDILIDFTRPEGTLTHLEICRQNGKAIVIGTTGFDEAGKQAIKQASADIPIVFAANFSVGVNLVLKLLEKAAKVMGEYSDIEIIEAHHRHKVDAPSGTALAMGESIAHALGRDLKACAVYAREGYTGERDPKSIGFATIRAGDIVGEHTAMFADIGERVEITHKASSRMTFANGAVKAALWLSGKNSGLFDMKDVLNLDLL.

NAD(+)-binding positions include glycine 12–methionine 17 and glutamate 38. Position 39 (arginine 39) interacts with NADP(+). NAD(+)-binding positions include glycine 102–threonine 104 and alanine 126–phenylalanine 129. Histidine 159 functions as the Proton donor/acceptor in the catalytic mechanism. Position 160 (histidine 160) interacts with (S)-2,3,4,5-tetrahydrodipicolinate. Lysine 163 serves as the catalytic Proton donor. Glycine 169–threonine 170 serves as a coordination point for (S)-2,3,4,5-tetrahydrodipicolinate.

The protein belongs to the DapB family. Homotetramer.

It is found in the cytoplasm. It carries out the reaction (S)-2,3,4,5-tetrahydrodipicolinate + NAD(+) + H2O = (2S,4S)-4-hydroxy-2,3,4,5-tetrahydrodipicolinate + NADH + H(+). The catalysed reaction is (S)-2,3,4,5-tetrahydrodipicolinate + NADP(+) + H2O = (2S,4S)-4-hydroxy-2,3,4,5-tetrahydrodipicolinate + NADPH + H(+). The protein operates within amino-acid biosynthesis; L-lysine biosynthesis via DAP pathway; (S)-tetrahydrodipicolinate from L-aspartate: step 4/4. Catalyzes the conversion of 4-hydroxy-tetrahydrodipicolinate (HTPA) to tetrahydrodipicolinate. This Photorhabdus laumondii subsp. laumondii (strain DSM 15139 / CIP 105565 / TT01) (Photorhabdus luminescens subsp. laumondii) protein is 4-hydroxy-tetrahydrodipicolinate reductase.